We begin with the raw amino-acid sequence, 221 residues long: MPGTSELITVAVPKGRLLQESSALFERALGVSPRKLLEGTRKLAADAPEAGLRFISIRAGDVASYVEHGAAEVGIVGLDVLREEPRDLYEPLDLGIGRCTVIVARPKGARPLPRGVAPRVATKYLSLAARHFAAKGVPAEIIPLHGSIEVAPSLGLADTIVDITETGETLRANGLVIEEKVLEVSARLVVNRVALKLHPERLRRLIEALRAAVAAAGAEAR.

This sequence belongs to the ATP phosphoribosyltransferase family. Short subfamily. In terms of assembly, heteromultimer composed of HisG and HisZ subunits.

The protein localises to the cytoplasm. It carries out the reaction 1-(5-phospho-beta-D-ribosyl)-ATP + diphosphate = 5-phospho-alpha-D-ribose 1-diphosphate + ATP. Its pathway is amino-acid biosynthesis; L-histidine biosynthesis; L-histidine from 5-phospho-alpha-D-ribose 1-diphosphate: step 1/9. Catalyzes the condensation of ATP and 5-phosphoribose 1-diphosphate to form N'-(5'-phosphoribosyl)-ATP (PR-ATP). Has a crucial role in the pathway because the rate of histidine biosynthesis seems to be controlled primarily by regulation of HisG enzymatic activity. The sequence is that of ATP phosphoribosyltransferase from Anaeromyxobacter sp. (strain K).